Here is a 657-residue protein sequence, read N- to C-terminus: Pentatricopeptide repeat-containing protein At1g11710, mitochondrial (657 aa).

Residues 1–74 (MFGHVFSRRT…REFRSSPKLA (74 aa)) constitute a mitochondrion transit peptide. PPR repeat units follow at residues 147–181 (SPDV…GFCV), 182–216 (SVHA…GYVE), 217–251 (NVNT…GVWP), 252–282 (NVVS…MGMM), 290–324 (NAVT…GVDC), 325–359 (NERT…GLVV), 360–394 (NTVI…NMQI), 395–429 (DRFT…KLVE), 430–464 (DIVC…GLSL), 465–499 (DAIS…NKTS), 500–530 (NLVI…MEIK), 531–565 (DIVT…DGEK), 568–602 (SLVT…GVVP), and 603–637 (DSIT…GVTP).

Belongs to the PPR family. P subfamily.

Its subcellular location is the mitochondrion. This Arabidopsis thaliana (Mouse-ear cress) protein is Pentatricopeptide repeat-containing protein At1g11710, mitochondrial.